Reading from the N-terminus, the 121-residue chain is uncharacterized protein (121 aa).

3 helical membrane passes run 26-46, 57-77, and 90-110; these read YACS…AVAT, SIPL…SVLI, and SFCF…LLCV.

It is found in the membrane. This is an uncharacterized protein from Saccharomyces cerevisiae (strain ATCC 204508 / S288c) (Baker's yeast).